Consider the following 164-residue polypeptide: uncharacterized protein (164 aa).

The segment covering 1 to 17 (MNSRVPATQSWFSSHLP) has biased composition (polar residues). Residues 1-48 (MNSRVPATQSWFSSHLPTTEPDLEPATAAEGSTTETATLSPETTSFND) are disordered. The span at 24–45 (EPATAAEGSTTETATLSPETTS) shows a compositional bias: low complexity. Residues 64–84 (MLLSFGIITVIGLAVAMVLYI) traverse the membrane as a helical segment. Positions 106–130 (TEEQDELEQELLEHGRDAASMQAAA) form a coiled coil.

Its subcellular location is the membrane. This is an uncharacterized protein from Mus musculus (Mouse).